The primary structure comprises 747 residues: Endoglucanase C (747 aa).

Residues 1–37 (MGHVTSPSKRYPASFKRAGSILGVSIALAAFSNVAAA) form the signal peptide. The CBM2 domain maps to 38–136 (GCEYVVTNSW…TVNGAACTGG (99 aa)). Disulfide bonds link cysteine 39/cysteine 133, cysteine 183/cysteine 214, and cysteine 193/cysteine 208. Residues 182–211 (QCNWYGTLYPLCVSTTSGWGYENNRSCISP) enclose the CBM10 domain. Residues 226 to 283 (GSSSPSSISSSSVRSSSSSSVVPPSSSSSSSVPSSSSSSVSSSSVVSSSSSSVSVPGT) form a disordered region. A compositionally biased stretch (low complexity) spans 227–281 (SSSPSSISSSSVRSSSSSSVVPPSSSSSSSVPSSSSSSVSSSSVVSSSSSSVSVP). Positions 280-747 (VPGTGVFRVN…TQLLHNMWGL (468 aa)) are catalytic. The active-site Proton donor is the glutamate 502. Glutamate 652 serves as the catalytic Nucleophile.

It belongs to the glycosyl hydrolase 5 (cellulase A) family.

The catalysed reaction is Endohydrolysis of (1-&gt;4)-beta-D-glucosidic linkages in cellulose, lichenin and cereal beta-D-glucans.. This is Endoglucanase C (celC) from Cellvibrio japonicus (strain Ueda107) (Pseudomonas fluorescens subsp. cellulosa).